A 226-amino-acid polypeptide reads, in one-letter code: Urease accessory protein UreF (226 aa).

The protein belongs to the UreF family. In terms of assembly, ureD, UreF and UreG form a complex that acts as a GTP-hydrolysis-dependent molecular chaperone, activating the urease apoprotein by helping to assemble the nickel containing metallocenter of UreC. The UreE protein probably delivers the nickel.

It localises to the cytoplasm. Required for maturation of urease via the functional incorporation of the urease nickel metallocenter. This chain is Urease accessory protein UreF, found in Paraburkholderia xenovorans (strain LB400).